The chain runs to 188 residues: Ribosome-recycling factor (188 aa).

It belongs to the RRF family.

The protein resides in the cytoplasm. In terms of biological role, responsible for the release of ribosomes from messenger RNA at the termination of protein biosynthesis. May increase the efficiency of translation by recycling ribosomes from one round of translation to another. The protein is Ribosome-recycling factor of Anaeromyxobacter dehalogenans (strain 2CP-1 / ATCC BAA-258).